Consider the following 483-residue polypeptide: Phosphoenolpyruvate carboxylase (483 aa).

The tract at residues 1–20 is disordered; it reads MKVPRCMSTQHPDNVNPPFF.

It belongs to the PEPCase type 2 family. As to quaternary structure, homotetramer. Mg(2+) serves as cofactor.

It catalyses the reaction oxaloacetate + phosphate = phosphoenolpyruvate + hydrogencarbonate. Its activity is regulated as follows. Inhibited by NaCl, KCl, ATP, ADP, GTP and aspartate. Unlike E.coli, not regulated by acetyl-CoA. Its function is as follows. Catalyzes the irreversible beta-carboxylation of phosphoenolpyruvate (PEP) to form oxaloacetate (OAA), a four-carbon dicarboxylic acid source for the tricarboxylic acid cycle. The polypeptide is Phosphoenolpyruvate carboxylase (ppcA) (Methanothermobacter thermautotrophicus (strain ATCC 29096 / DSM 1053 / JCM 10044 / NBRC 100330 / Delta H) (Methanobacterium thermoautotrophicum)).